A 270-amino-acid polypeptide reads, in one-letter code: MPELPEVETTRRGIAPYLEGQRVSRVIVRERRLRWPIPEDLDVRLSGQRIECVERRAKYLLIKAEAGSLIGHLGMSGSLRLVECGLVAAKHEHVDIELESGLALRYTDPRRFGALLWCEDPLRHELLARLGPEPLGGLFDGERLFQLSRGRSMAVKPFIMDNAVVVGVGNIYATEALFAAGIDPRREAGSISRARYLRLAEEIKRILAHAIERGGTTLRDFVGGDGQPGYFQQELFAYGRAGEFCKVCGTTLREVKLGQRASVYCPRCQR.

Proline 2 functions as the Schiff-base intermediate with DNA in the catalytic mechanism. Catalysis depends on glutamate 3, which acts as the Proton donor. Lysine 58 acts as the Proton donor; for beta-elimination activity in catalysis. Histidine 91, arginine 110, and arginine 151 together coordinate DNA. Residues 236–270 (FAYGRAGEFCKVCGTTLREVKLGQRASVYCPRCQR) form an FPG-type zinc finger. The active-site Proton donor; for delta-elimination activity is arginine 260.

It belongs to the FPG family. Monomer. It depends on Zn(2+) as a cofactor.

It carries out the reaction Hydrolysis of DNA containing ring-opened 7-methylguanine residues, releasing 2,6-diamino-4-hydroxy-5-(N-methyl)formamidopyrimidine.. It catalyses the reaction 2'-deoxyribonucleotide-(2'-deoxyribose 5'-phosphate)-2'-deoxyribonucleotide-DNA = a 3'-end 2'-deoxyribonucleotide-(2,3-dehydro-2,3-deoxyribose 5'-phosphate)-DNA + a 5'-end 5'-phospho-2'-deoxyribonucleoside-DNA + H(+). In terms of biological role, involved in base excision repair of DNA damaged by oxidation or by mutagenic agents. Acts as a DNA glycosylase that recognizes and removes damaged bases. Has a preference for oxidized purines, such as 7,8-dihydro-8-oxoguanine (8-oxoG). Has AP (apurinic/apyrimidinic) lyase activity and introduces nicks in the DNA strand. Cleaves the DNA backbone by beta-delta elimination to generate a single-strand break at the site of the removed base with both 3'- and 5'-phosphates. The chain is Formamidopyrimidine-DNA glycosylase from Ectopseudomonas mendocina (strain ymp) (Pseudomonas mendocina).